The chain runs to 1374 residues: Alpha,alpha-trehalose-phosphate synthase [UDP-forming] 1 (1374 aa).

Disordered regions lie at residues 28 to 66 (DTGK…SDKD), 86 to 117 (YTPG…DDEG), and 1352 to 1374 (KADS…SKQQ). Basic and acidic residues-rich tracts occupy residues 56–66 (DPFDRPKSDKD) and 86–95 (YTPGKEKGVD). Acidic residues-rich tracts occupy residues 96–109 (QDES…EDHD) and 1356–1368 (YYDD…DQED).

This sequence in the N-terminal section; belongs to the glycosyltransferase 20 family. In the C-terminal section; belongs to the gob-1 trehalose phosphatase family.

It catalyses the reaction D-glucose 6-phosphate + UDP-alpha-D-glucose = alpha,alpha-trehalose 6-phosphate + UDP + H(+). In terms of biological role, catalyzes the production of trehalose from glucose-6-phosphate and UDP-alpha-D-glucose in a 2 step process. The chain is Alpha,alpha-trehalose-phosphate synthase [UDP-forming] 1 (tps-1) from Caenorhabditis briggsae.